The chain runs to 369 residues: tRNA pseudouridine synthase D (369 aa).

Residue Asp80 is the Nucleophile of the active site. Residues 156–318 form the TRUD domain; that stretch reads GIPNWFGEQR…LKQERRALRL (163 aa).

Belongs to the pseudouridine synthase TruD family.

It catalyses the reaction uridine(13) in tRNA = pseudouridine(13) in tRNA. Responsible for synthesis of pseudouridine from uracil-13 in transfer RNAs. The chain is tRNA pseudouridine synthase D from Xanthomonas oryzae pv. oryzae (strain KACC10331 / KXO85).